Here is a 475-residue protein sequence, read N- to C-terminus: MQILFVASEVAPWSKTGGLGDVAGALPRALAERGNEVVVVTPRHGSIDPRAAGLQPVRTSLHVRGEPVALWVKRGPAPVYFVEHPHLFGSRRGLYGDGGRDHPDNAERFAFLTRAALALPGALGLRPRILHLNDWQCGLGPWLLRHEHARDPALAGARTVFTIHNLAYQGLFPKQVLPALGLPWEVFRWEAMEFFDQLSFMKAGLAFADALTTVSPTYAREILTPEGGASLDALLRHRARDLHGILNGIDVHAWDPARDPHLPAHFTPGELAGKAACKAALQREVGLPVRRDAPLAGLVTRLAEQKGIDLVAAALPALLARDVQVVLLGSGDPAYEEAFARAAREHPDRVAARIGFDEGLAHRIEAGADLFLMPSRFEPCGLNQMYSLRYGTVPVVRSVGGLADTVEDFDGFARGTGFRFAEYTPQALLTATRRALDVFRDRRAWRGLVERGMAEDNSWERSAARYEALYRTLAP.

Residue Lys15 participates in ADP-alpha-D-glucose binding.

Belongs to the glycosyltransferase 1 family. Bacterial/plant glycogen synthase subfamily.

The enzyme catalyses [(1-&gt;4)-alpha-D-glucosyl](n) + ADP-alpha-D-glucose = [(1-&gt;4)-alpha-D-glucosyl](n+1) + ADP + H(+). It functions in the pathway glycan biosynthesis; glycogen biosynthesis. In terms of biological role, synthesizes alpha-1,4-glucan chains using ADP-glucose. This chain is Glycogen synthase, found in Anaeromyxobacter dehalogenans (strain 2CP-C).